The primary structure comprises 153 residues: UPF0756 membrane protein LCABL_15860 (153 aa).

4 consecutive transmembrane segments (helical) span residues 4 to 24 (WLFLLGILAIAIVGKNKSLII), 52 to 72 (WGVTVISAAIMVPIATGEIGF), 85 to 105 (WIAIGCGVLVAVLSAKGVGLL), and 115 to 135 (LVFGTIIGVVFLKGIAAGPVI).

The protein belongs to the UPF0756 family.

The protein resides in the cell membrane. This Lacticaseibacillus casei (strain BL23) (Lactobacillus casei) protein is UPF0756 membrane protein LCABL_15860.